The primary structure comprises 331 residues: Protein C10 (331 aa).

Belongs to the poxviridae C4/C10 protein family.

This Vaccinia virus (strain Copenhagen) (VACV) protein is Protein C10.